The sequence spans 20 residues: Cathepsin L-like cysteine proteinase (20 aa).

Belongs to the peptidase C1 family.

The protein localises to the lysosome. Thiol protease. This chain is Cathepsin L-like cysteine proteinase, found in Fasciola hepatica (Liver fluke).